We begin with the raw amino-acid sequence, 342 residues long: Holliday junction branch migration complex subunit RuvB (342 aa).

The segment at 1 to 179 (MTNILSPEKS…FGIPMRLNFY (179 aa)) is large ATPase domain (RuvB-L). Residues I18, R19, G60, K63, T64, T65, 126–128 (EDF), R169, Y179, and R216 contribute to the ATP site. T64 serves as a coordination point for Mg(2+). The tract at residues 180 to 250 (NTEELKKVLN…ISDFGLNRLE (71 aa)) is small ATPAse domain (RuvB-S). Residues 253-342 (CIGLDSNDYR…HQFNIFNENE (90 aa)) form a head domain (RuvB-H) region. 3 residues coordinate DNA: R289, R308, and R313.

This sequence belongs to the RuvB family. As to quaternary structure, homohexamer. Forms an RuvA(8)-RuvB(12)-Holliday junction (HJ) complex. HJ DNA is sandwiched between 2 RuvA tetramers; dsDNA enters through RuvA and exits via RuvB. An RuvB hexamer assembles on each DNA strand where it exits the tetramer. Each RuvB hexamer is contacted by two RuvA subunits (via domain III) on 2 adjacent RuvB subunits; this complex drives branch migration. In the full resolvosome a probable DNA-RuvA(4)-RuvB(12)-RuvC(2) complex forms which resolves the HJ.

Its subcellular location is the cytoplasm. It carries out the reaction ATP + H2O = ADP + phosphate + H(+). The RuvA-RuvB-RuvC complex processes Holliday junction (HJ) DNA during genetic recombination and DNA repair, while the RuvA-RuvB complex plays an important role in the rescue of blocked DNA replication forks via replication fork reversal (RFR). RuvA specifically binds to HJ cruciform DNA, conferring on it an open structure. The RuvB hexamer acts as an ATP-dependent pump, pulling dsDNA into and through the RuvAB complex. RuvB forms 2 homohexamers on either side of HJ DNA bound by 1 or 2 RuvA tetramers; 4 subunits per hexamer contact DNA at a time. Coordinated motions by a converter formed by DNA-disengaged RuvB subunits stimulates ATP hydrolysis and nucleotide exchange. Immobilization of the converter enables RuvB to convert the ATP-contained energy into a lever motion, pulling 2 nucleotides of DNA out of the RuvA tetramer per ATP hydrolyzed, thus driving DNA branch migration. The RuvB motors rotate together with the DNA substrate, which together with the progressing nucleotide cycle form the mechanistic basis for DNA recombination by continuous HJ branch migration. Branch migration allows RuvC to scan DNA until it finds its consensus sequence, where it cleaves and resolves cruciform DNA. The sequence is that of Holliday junction branch migration complex subunit RuvB from Rickettsia africae (strain ESF-5).